We begin with the raw amino-acid sequence, 310 residues long: Acetyl-coenzyme A carboxylase carboxyl transferase subunit beta (310 aa).

A CoA carboxyltransferase N-terminal domain is found at 27–296 (LWRKCPNCEA…QDRDAEPDDT (270 aa)). Zn(2+) contacts are provided by Cys31, Cys34, Cys50, and Cys53. The C4-type zinc-finger motif lies at 31–53 (CPNCEAVLYLPELERHQSVCPKC). The disordered stretch occupies residues 282 to 310 (THQPHQDRDAEPDDTASQSTLDEFSQADH).

The protein belongs to the AccD/PCCB family. As to quaternary structure, acetyl-CoA carboxylase is a heterohexamer composed of biotin carboxyl carrier protein (AccB), biotin carboxylase (AccC) and two subunits each of ACCase subunit alpha (AccA) and ACCase subunit beta (AccD). The cofactor is Zn(2+).

It is found in the cytoplasm. The enzyme catalyses N(6)-carboxybiotinyl-L-lysyl-[protein] + acetyl-CoA = N(6)-biotinyl-L-lysyl-[protein] + malonyl-CoA. The protein operates within lipid metabolism; malonyl-CoA biosynthesis; malonyl-CoA from acetyl-CoA: step 1/1. Its function is as follows. Component of the acetyl coenzyme A carboxylase (ACC) complex. Biotin carboxylase (BC) catalyzes the carboxylation of biotin on its carrier protein (BCCP) and then the CO(2) group is transferred by the transcarboxylase to acetyl-CoA to form malonyl-CoA. This Chromohalobacter salexigens (strain ATCC BAA-138 / DSM 3043 / CIP 106854 / NCIMB 13768 / 1H11) protein is Acetyl-coenzyme A carboxylase carboxyl transferase subunit beta.